The primary structure comprises 59 residues: Putative potassium channel toxin Ts23 (59 aa).

Positions Met-1–Gln-22 are cleaved as a signal peptide. Cystine bridges form between Cys-29/Cys-50, Cys-35/Cys-55, and Cys-39/Cys-57.

It belongs to the short scorpion toxin superfamily. Potassium channel inhibitor family. Alpha-KTx 04 subfamily. Expressed by the venom gland.

The protein localises to the secreted. Its function is as follows. Potently blocks Kv1.1/KCNA1 (85%), Kv1.2/KCNA2 (91%), Kv1.3/KCNA3 (89%), Kv1.6/KCNA6 (94%), and Shaker (97%). The protein is Putative potassium channel toxin Ts23 of Tityus serrulatus (Brazilian scorpion).